A 314-amino-acid polypeptide reads, in one-letter code: Mitochondrial 2-oxoglutarate/malate carrier protein (314 aa).

Residue A2 is modified to N-acetylalanine. The residue at position 6 (S6) is a Phosphoserine. Solcar repeat units follow at residues 23–108 (VKFL…LFER), 117–208 (PGFL…SKQF), and 217–306 (DNIL…MNKA). Residues 24–42 (KFLFGGLAGMGATVFVQPL) traverse the membrane as a helical segment. At K57 the chain carries N6-succinyllysine. Residue K73 is modified to N6-acetyllysine. The chain crosses the membrane as a helical span at residues 83-101 (GLSAGLLRQATYTTTRLGI). Position 102 is a phosphotyrosine (Y102). 3 helical membrane passes run 119 to 140 (FLLKALIGMTAGATGAFVGPPA), 183 to 202 (GCIPTMARAVVVNAAQLASY), and 222 to 240 (HFCAIMISGLVTTAASMPV). An N6-acetyllysine modification is found at K256. The helical transmembrane segment at 281–300 (GFTPYYARLGPHTVLTFIFL) threads the bilayer.

This sequence belongs to the mitochondrial carrier (TC 2.A.29) family. Interacts with SMIM26. In terms of tissue distribution, expressed in liver, heart and brain.

It localises to the mitochondrion inner membrane. The catalysed reaction is (S)-malate(in) + 2-oxoglutarate(out) = (S)-malate(out) + 2-oxoglutarate(in). It catalyses the reaction malonate(in) + 2-oxoglutarate(out) = malonate(out) + 2-oxoglutarate(in). The enzyme catalyses succinate(in) + 2-oxoglutarate(out) = succinate(out) + 2-oxoglutarate(in). It carries out the reaction maleate(in) + 2-oxoglutarate(out) = maleate(out) + 2-oxoglutarate(in). The catalysed reaction is oxaloacetate(in) + 2-oxoglutarate(out) = oxaloacetate(out) + 2-oxoglutarate(in). Catalyzes the transport of 2-oxoglutarate (alpha-oxoglutarate) across the inner mitochondrial membrane in an electroneutral exchange for malate. Can also exchange 2-oxoglutarate for other dicarboxylic acids such as malonate, succinate, maleate and oxaloacetate, although with lower affinity. Contributes to several metabolic processes, including the malate-aspartate shuttle, the oxoglutarate/isocitrate shuttle, in gluconeogenesis from lactate, and in nitrogen metabolism. Maintains mitochondrial fusion and fission events, and the organization and morphology of cristae. Involved in the regulation of apoptosis. Helps protect from cytotoxic-induced apoptosis by modulating glutathione levels in mitochondria. This Rattus norvegicus (Rat) protein is Mitochondrial 2-oxoglutarate/malate carrier protein (Slc25a11).